Reading from the N-terminus, the 73-residue chain is Putative sulfur carrier protein AF_0556 (73 aa).

Residue cysteine 11 is the Cysteine persulfide intermediate of the active site.

This sequence belongs to the sulfur carrier protein TusA family.

This is Putative sulfur carrier protein AF_0556 from Archaeoglobus fulgidus (strain ATCC 49558 / DSM 4304 / JCM 9628 / NBRC 100126 / VC-16).